Consider the following 172-residue polypeptide: MKKKQVMLALTAAAGLGLTALHSAPAAKAAPLHDISVSMPSSDTYIIKAGKLNVRTEPNHEGDILGTVSSEQKVKVDRFVNADWAQIHFKGKKAYISTHFLMKTASQAKTTKQTAFYTPTPENGKAKQLSSGTEVTILGWGFSENGGFDFTWAFVDYGGVKGYIHTKDLQMR.

Residues 1–29 form the signal peptide; that stretch reads MKKKQVMLALTAAAGLGLTALHSAPAAKA. SH3b domains lie at 42-105 and 112-172; these read SDTY…MKTA and KQTA…LQMR.

This is an uncharacterized protein from Bacillus subtilis (strain 168).